Reading from the N-terminus, the 115-residue chain is NADH-ubiquinone oxidoreductase chain 3 (115 aa).

3 consecutive transmembrane segments (helical) span residues 5-25 (LTFM…FWLP), 55-75 (FFLV…LLPL), and 86-106 (LMLT…AYEW).

This sequence belongs to the complex I subunit 3 family. Core subunit of respiratory chain NADH dehydrogenase (Complex I) which is composed of 45 different subunits. Interacts with TMEM186. Interacts with TMEM242.

The protein resides in the mitochondrion inner membrane. It carries out the reaction a ubiquinone + NADH + 5 H(+)(in) = a ubiquinol + NAD(+) + 4 H(+)(out). Core subunit of the mitochondrial membrane respiratory chain NADH dehydrogenase (Complex I) which catalyzes electron transfer from NADH through the respiratory chain, using ubiquinone as an electron acceptor. Essential for the catalytic activity of complex I. This is NADH-ubiquinone oxidoreductase chain 3 from Avahi unicolor (Sambirano woolly lemur).